Consider the following 456-residue polypeptide: Equilibrative nucleoside transporter 2 (456 aa).

Over 1–12 the chain is Cytoplasmic; that stretch reads MAHGNAPRDSYH. Residues 13–29 traverse the membrane as a helical segment; sequence LVGISFFILGLGTLLPW. Over 30–68 the chain is Extracellular; that stretch reads NFFITAIPYFQGRLAGTNSSAETPSTNHTSPTDTFNFNN. Asn47 and Asn56 each carry an N-linked (GlcNAc...) asparagine glycan. The chain crosses the membrane as a helical span at residues 69–93; that stretch reads WVTLLSQLPLLLFTLLNSFLYQCIP. Residues 94 to 97 lie on the Cytoplasmic side of the membrane; that stretch reads ESVR. The chain crosses the membrane as a helical span at residues 98-116; that stretch reads ILGSLLAILLLFALTAALV. Over 117-124 the chain is Extracellular; the sequence is KVDLSPGL. Residues 125-143 form a helical membrane-spanning segment; that stretch reads FFSITMASVWFINSFCAVL. At 144–160 the chain is on the cytoplasmic side; it reads QGSLFGQLGTMPSTYST. Residues 161-185 form a helical membrane-spanning segment; it reads LFLSGQGLAGIFAALAMLTSLASGV. Residues 186–192 are Extracellular-facing; the sequence is DPQTSAL. The helical transmembrane segment at 193 to 213 threads the bilayer; the sequence is GYFITPCVGILLSIICYLSLP. Residues 214–291 are Cytoplasmic-facing; that stretch reads HLKFARYYLT…VFVVFRKIWL (78 aa). Ser251 bears the Phosphoserine mark. The chain crosses the membrane as a helical span at residues 292-311; the sequence is TALCLVLVFTVTLSVFPAIT. Residues 312 to 323 are Extracellular-facing; that stretch reads AMVTTSSNSPGK. A helical transmembrane segment spans residues 324–342; sequence WSQFFNPICCFLLFNVMDW. Residues 343 to 359 are Cytoplasmic-facing; that stretch reads LGRSLTSYFLWPDEDSQ. The chain crosses the membrane as a helical span at residues 360–378; it reads LLPLLVCLRFLFVPLFMLC. At 379–393 the chain is on the extracellular side; sequence HVPQRARLPIIFWQD. The chain crosses the membrane as a helical span at residues 394 to 413; the sequence is AYFITFMLLFAISNGYFVSL. The Cytoplasmic segment spans residues 414–431; the sequence is TMCLAPRQVLPHEREVAG. A helical transmembrane segment spans residues 432 to 452; it reads ALMTFFLALGLSCGASLSFLF. Over 453-456 the chain is Extracellular; sequence KALL.

Belongs to the SLC29A/ENT transporter (TC 2.A.57) family. As to expression, expressed in squeletal muscles. Expressed in testis at the blood-brain-barrier.

The protein localises to the apical cell membrane. Its subcellular location is the basolateral cell membrane. It carries out the reaction uridine(out) = uridine(in). The catalysed reaction is inosine(in) = inosine(out). It catalyses the reaction adenosine(in) = adenosine(out). The enzyme catalyses thymidine(in) = thymidine(out). It carries out the reaction hypoxanthine(out) = hypoxanthine(in). The catalysed reaction is adenine(out) = adenine(in). It catalyses the reaction cytidine(in) = cytidine(out). The enzyme catalyses thymine(out) = thymine(in). It carries out the reaction uracil(in) = uracil(out). The catalysed reaction is guanine(out) = guanine(in). It catalyses the reaction guanosine(in) = guanosine(out). Its function is as follows. Bidirectional uniporter involved in the facilitative transport of nucleosides and nucleobases, and contributes to maintaining their cellular homeostasis. Functions as a Na(+)-independent, passive transporter. Involved in the transport of nucleosides such as inosine, adenosine, uridine, thymidine, cytidine and guanosine. Also able to transport purine nucleobases (hypoxanthine, adenine, guanine) and pyrimidine nucleobases (thymine, uracil). Involved in nucleoside transport at basolateral membrane of kidney cells, allowing liver absorption of nucleoside metabolites. Mediates apical nucleoside uptake into Sertoli cells, thereby regulating the transport of nucleosides in testis across the blood-testis-barrier. Mediates both the influx and efflux of hypoxanthine in skeletal muscle microvascular endothelial cells to control the amount of intracellular hypoxanthine available for xanthine oxidase-mediated ROS production. The protein is Equilibrative nucleoside transporter 2 of Rattus norvegicus (Rat).